A 494-amino-acid chain; its full sequence is Rho GTPase-activating protein 19 (494 aa).

At A2 the chain carries N-acetylalanine. A phosphoserine mark is found at S7 and S31. The region spanning 102–308 (MSLKRKEKGV…FMIKHSQKLF (207 aa)) is the Rho-GAP domain. Disordered stretches follow at residues 349–368 (KSQKRNRVDSCPHQEETQHH) and 399–421 (QSLTQTPGREPSTSQVQKRARSR). Basic and acidic residues predominate over residues 354–368 (NRVDSCPHQEETQHH). Residues 399–415 (QSLTQTPGREPSTSQVQ) show a composition bias toward polar residues. A phosphoserine mark is found at S422, S438, and S470. Phosphothreonine is present on T478.

In terms of tissue distribution, strong expression in fetal heart, brain, placenta, lung, liver, skeletal muscle, kidney and pancreas. Weak expression in adult pancreas, spleen, thymus, and ovary.

Its subcellular location is the nucleus. Functionally, GTPase activator for the Rho-type GTPases by converting them to an inactive GDP-bound state. This chain is Rho GTPase-activating protein 19 (ARHGAP19), found in Homo sapiens (Human).